Consider the following 114-residue polypeptide: Probable divalent-cation tolerance protein cutA homolog (114 aa).

It belongs to the CutA family. As to quaternary structure, homotrimer.

This Encephalitozoon cuniculi (strain GB-M1) (Microsporidian parasite) protein is Probable divalent-cation tolerance protein cutA homolog.